A 160-amino-acid chain; its full sequence is Transcription elongation factor GreA (160 aa).

A coiled-coil region spans residues 1–72 (MAEKTYPMTL…QISSLETKIR (72 aa)).

The protein belongs to the GreA/GreB family.

Necessary for efficient RNA polymerase transcription elongation past template-encoded arresting sites. The arresting sites in DNA have the property of trapping a certain fraction of elongating RNA polymerases that pass through, resulting in locked ternary complexes. Cleavage of the nascent transcript by cleavage factors such as GreA or GreB allows the resumption of elongation from the new 3'terminus. GreA releases sequences of 2 to 3 nucleotides. In Streptococcus sanguinis (strain SK36), this protein is Transcription elongation factor GreA.